Consider the following 261-residue polypeptide: Guanine nucleotide exchange factor BopE (261 aa).

It belongs to the GEF (guanine exchange factor) SopE family. Monomer. Interacts with human CDC42.

The protein resides in the secreted. Its function is as follows. Activator for both CDC42 and RAC1 by directly interacting with these Rho GTPases and acting as a guanine nucleotide exchange factor (GEF). This activation results in actin cytoskeleton rearrangements and stimulates membrane ruffling, thus promoting bacterial entry into non-phagocytic cells. The polypeptide is Guanine nucleotide exchange factor BopE (bopE) (Burkholderia mallei (strain NCTC 10247)).